We begin with the raw amino-acid sequence, 269 residues long: Pertussis toxin subunit 1 homolog (269 aa).

The signal sequence occupies residues 1 to 34; the sequence is MRCTRAIRQTARTGWLTWLAILAVTAPVTSPAWA.

Belongs to the bacterial exotoxin subunit A family.

The sequence is that of Pertussis toxin subunit 1 homolog (ptxA) from Bordetella bronchiseptica (strain ATCC BAA-588 / NCTC 13252 / RB50) (Alcaligenes bronchisepticus).